Reading from the N-terminus, the 206-residue chain is Ribosomal RNA small subunit methyltransferase G (206 aa).

Residues glycine 74, leucine 79, 125–126, and arginine 140 each bind S-adenosyl-L-methionine; that span reads VE.

It belongs to the methyltransferase superfamily. RNA methyltransferase RsmG family.

The protein localises to the cytoplasm. The enzyme catalyses guanosine(527) in 16S rRNA + S-adenosyl-L-methionine = N(7)-methylguanosine(527) in 16S rRNA + S-adenosyl-L-homocysteine. Its function is as follows. Specifically methylates the N7 position of guanine in position 527 of 16S rRNA. The protein is Ribosomal RNA small subunit methyltransferase G of Shewanella amazonensis (strain ATCC BAA-1098 / SB2B).